A 92-amino-acid polypeptide reads, in one-letter code: Cell division protein FtsB (92 aa).

At 1–3 (MRF) the chain is on the cytoplasmic side. A helical membrane pass occupies residues 4-21 (FQVGLLCLALFVQYRLWF). Residues 22–92 (GHNGVQDYTR…TFIRVLPAQQ (71 aa)) lie on the Periplasmic side of the membrane. Residues 40 to 73 (LQTNEKLIKRNKVLTADIEDLKLGHEGIEERARN) are a coiled coil.

Belongs to the FtsB family. In terms of assembly, part of a complex composed of FtsB, FtsL and FtsQ.

Its subcellular location is the cell inner membrane. In terms of biological role, essential cell division protein. May link together the upstream cell division proteins, which are predominantly cytoplasmic, with the downstream cell division proteins, which are predominantly periplasmic. This Pseudoalteromonas translucida (strain TAC 125) protein is Cell division protein FtsB.